The following is a 37-amino-acid chain: Tick defensin 2 (37 aa).

Cystine bridges form between Cys-4–Cys-26, Cys-11–Cys-34, and Cys-15–Cys-36.

Belongs to the invertebrate defensin family.

It is found in the secreted. Its function is as follows. Antibacterial peptide mostly active against Gram-positive bacteria (MIC=0.24 ug/ml on Bacillus subtilis, and MIC=0.94 ug/ml on Micrococcus luteus, MIC&gt;120 ug/ml on both Escherichia coli and Pseudomonas aeruginosa). This Ornithodoros savignyi (African eyed tampan) protein is Tick defensin 2.